Reading from the N-terminus, the 295-residue chain is 33 kDa chaperonin (295 aa).

Disulfide bonds link C233–C235 and C267–C270.

Belongs to the HSP33 family. Under oxidizing conditions two disulfide bonds are formed involving the reactive cysteines. Under reducing conditions zinc is bound to the reactive cysteines and the protein is inactive.

Its subcellular location is the cytoplasm. In terms of biological role, redox regulated molecular chaperone. Protects both thermally unfolding and oxidatively damaged proteins from irreversible aggregation. Plays an important role in the bacterial defense system toward oxidative stress. This chain is 33 kDa chaperonin, found in Mannheimia succiniciproducens (strain KCTC 0769BP / MBEL55E).